A 328-amino-acid chain; its full sequence is DNA-directed RNA polymerase subunit alpha (328 aa).

The segment at 1-234 (MVREKVKVST…DLFIPFLQAE (234 aa)) is alpha N-terminal domain (alpha-NTD). Positions 268–328 (IALKSIFIDQ…KQIMSILEKK (61 aa)) are alpha C-terminal domain (alpha-CTD).

The protein belongs to the RNA polymerase alpha chain family. In terms of assembly, in plastids the minimal PEP RNA polymerase catalytic core is composed of four subunits: alpha, beta, beta', and beta''. When a (nuclear-encoded) sigma factor is associated with the core the holoenzyme is formed, which can initiate transcription.

The protein localises to the plastid. The protein resides in the chloroplast. The catalysed reaction is RNA(n) + a ribonucleoside 5'-triphosphate = RNA(n+1) + diphosphate. DNA-dependent RNA polymerase catalyzes the transcription of DNA into RNA using the four ribonucleoside triphosphates as substrates. This is DNA-directed RNA polymerase subunit alpha from Citrus sinensis (Sweet orange).